The primary structure comprises 251 residues: 4-hydroxy-tetrahydrodipicolinate reductase (251 aa).

NAD(+) is bound by residues 9–14 (GCNGKM), 85–87 (ATT), and 109–112 (SANM). Residue histidine 141 is the Proton donor/acceptor of the active site. Residue histidine 142 participates in (S)-2,3,4,5-tetrahydrodipicolinate binding. The Proton donor role is filled by lysine 145. 151 to 152 (GT) is a binding site for (S)-2,3,4,5-tetrahydrodipicolinate.

The protein belongs to the DapB family.

It localises to the cytoplasm. The enzyme catalyses (S)-2,3,4,5-tetrahydrodipicolinate + NAD(+) + H2O = (2S,4S)-4-hydroxy-2,3,4,5-tetrahydrodipicolinate + NADH + H(+). It carries out the reaction (S)-2,3,4,5-tetrahydrodipicolinate + NADP(+) + H2O = (2S,4S)-4-hydroxy-2,3,4,5-tetrahydrodipicolinate + NADPH + H(+). Its pathway is amino-acid biosynthesis; L-lysine biosynthesis via DAP pathway; (S)-tetrahydrodipicolinate from L-aspartate: step 4/4. Its function is as follows. Catalyzes the conversion of 4-hydroxy-tetrahydrodipicolinate (HTPA) to tetrahydrodipicolinate. The chain is 4-hydroxy-tetrahydrodipicolinate reductase from Caldanaerobacter subterraneus subsp. tengcongensis (strain DSM 15242 / JCM 11007 / NBRC 100824 / MB4) (Thermoanaerobacter tengcongensis).